The following is a 96-amino-acid chain: Non-specific lipid-transfer protein 2 (96 aa).

Positions 1–27 (MMRRLAVLVLAVAMVAACGGGVVGVAG) are cleaved as a signal peptide. Disulfide bonds link Cys-30/Cys-62, Cys-38/Cys-52, Cys-53/Cys-88, and Cys-64/Cys-95.

The protein belongs to the plant LTP family. B11E subfamily.

In terms of biological role, transfer lipids across membranes. May play a role in plant defense or in the biosynthesis of cuticle layers. The sequence is that of Non-specific lipid-transfer protein 2 (LTP-2) from Oryza sativa subsp. indica (Rice).